The primary structure comprises 122 residues: Cysteine proteinase inhibitor 5 (122 aa).

An N-terminal signal peptide occupies residues 1–26 (MTSKVVFLLLLSLVVVLLPLYASAAA). The Cystatin domain occupies 29–117 (GGWSPISNVT…RNLTSFEPAN (89 aa)). Residue Asn-36 is glycosylated (N-linked (GlcNAc...) asparagine). The Secondary area of contact signature appears at 72–76 (QVVSG). N-linked (GlcNAc...) asparagine glycosylation occurs at Asn-109.

It belongs to the cystatin family. Phytocystatin subfamily.

It localises to the secreted. Its function is as follows. Specific inhibitor of cysteine proteinases. Probably involved in the regulation of endogenous processes and in defense against pests and pathogens. This chain is Cysteine proteinase inhibitor 5 (CYS5), found in Arabidopsis thaliana (Mouse-ear cress).